We begin with the raw amino-acid sequence, 90 residues long: Molybdopterin synthase sulfur carrier subunit (90 aa).

A 1-thioglycine; alternate modification is found at glycine 90. Glycine 90 is modified (glycyl adenylate; alternate).

The protein belongs to the MoaD family. MOCS2A subfamily. In terms of assembly, heterotetramer; composed of 2 small (Mocs2A) and 2 large (Mocs2B) subunits. Post-translationally, C-terminal thiocarboxylation occurs in 2 steps, it is first acyl-adenylated (-COAMP) via the hesA/moeB/thiF part of MOCS3, then thiocarboxylated (-COSH) via the rhodanese domain of MOCS3.

Its subcellular location is the cytoplasm. The protein operates within cofactor biosynthesis; molybdopterin biosynthesis. In terms of biological role, acts as a sulfur carrier required for molybdopterin biosynthesis. Component of the molybdopterin synthase complex that catalyzes the conversion of precursor Z into molybdopterin by mediating the incorporation of 2 sulfur atoms into precursor Z to generate a dithiolene group. In the complex, serves as sulfur donor by being thiocarboxylated (-COSH) at its C-terminus by MOCS3. After interaction with Mocs2B, the sulfur is then transferred to precursor Z to form molybdopterin. The sequence is that of Molybdopterin synthase sulfur carrier subunit from Drosophila sechellia (Fruit fly).